We begin with the raw amino-acid sequence, 293 residues long: DOMON domain-containing protein FRRS1L (293 aa).

Residues 1–28 form the signal peptide; that stretch reads MARPPRQHPGVWASLLLLLLTGPAACAA. Residues 29 to 61 are disordered; it reads SPADDGAGPGGRGPRGRARGDTGADEAVPRHDS. A compositionally biased stretch (basic and acidic residues) spans 46–61; that stretch reads ARGDTGADEAVPRHDS. The region spanning 119–234 is the DOMON domain; that stretch reads CDYFLSYRMI…WYYLFAWGPA (116 aa). Residues 271 to 291 form a helical membrane-spanning segment; that stretch reads TFSSPFCLLLIVALTFYLLMG.

Component of the outer core of AMPAR complex. AMPAR complex consists of an inner core made of 4 pore-forming GluA/GRIA proteins (GRIA1, GRIA2, GRIA3 and GRIA4) and 4 major auxiliary subunits arranged in a twofold symmetry. One of the two pairs of distinct binding sites is occupied either by CNIH2, CNIH3 or CACNG2, CACNG3. The other harbors CACNG2, CACNG3, CACNG4, CACNG8 or GSG1L. This inner core of AMPAR complex is complemented by outer core constituents binding directly to the GluA/GRIA proteins at sites distinct from the interaction sites of the inner core constituents. Outer core constituents include at least PRRT1, PRRT2, CKAMP44/SHISA9, FRRS1L and NRN1. The proteins of the inner and outer core serve as a platform for other, more peripherally associated AMPAR constituents. Alone or in combination, these auxiliary subunits control the gating and pharmacology of the AMPAR complex and profoundly impact their biogenesis and protein processing. As to expression, expressed in adult and fetal brain. Very weak expression in medulla, spinal cord and in adult ovary.

Its subcellular location is the cell membrane. The protein localises to the synapse. Important modulator of glutamate signaling pathway. This chain is DOMON domain-containing protein FRRS1L (FRRS1L), found in Homo sapiens (Human).